A 432-amino-acid chain; its full sequence is Glutamyl-tRNA reductase (432 aa).

Substrate is bound by residues 49-52 (TCNR), Ser101, 106-108 (EPQ), and Gln112. Catalysis depends on Cys50, which acts as the Nucleophile. Position 181-186 (181-186 (GAGETI)) interacts with NADP(+). A disordered region spans residues 408–432 (PEKPGYRHPPVATPIVRTDDANPAP).

This sequence belongs to the glutamyl-tRNA reductase family. As to quaternary structure, homodimer.

It carries out the reaction (S)-4-amino-5-oxopentanoate + tRNA(Glu) + NADP(+) = L-glutamyl-tRNA(Glu) + NADPH + H(+). It functions in the pathway porphyrin-containing compound metabolism; protoporphyrin-IX biosynthesis; 5-aminolevulinate from L-glutamyl-tRNA(Glu): step 1/2. In terms of biological role, catalyzes the NADPH-dependent reduction of glutamyl-tRNA(Glu) to glutamate 1-semialdehyde (GSA). This Xanthomonas campestris pv. campestris (strain 8004) protein is Glutamyl-tRNA reductase.